Consider the following 309-residue polypeptide: Foldase protein PrsA (309 aa).

The N-terminal stretch at 1 to 22 is a signal peptide; sequence MKTRSKLAAGFLTLMSVATLAA. Cysteine 23 is lipidated: N-palmitoyl cysteine. Cysteine 23 carries S-diacylglycerol cysteine lipidation. Residues 146-241 enclose the PpiC domain; it reads TPETSVQVIK…TSYYIIKVTD (96 aa).

Belongs to the PrsA family.

The protein resides in the cell membrane. It carries out the reaction [protein]-peptidylproline (omega=180) = [protein]-peptidylproline (omega=0). Its function is as follows. Plays a major role in protein secretion by helping the post-translocational extracellular folding of several secreted proteins. The polypeptide is Foldase protein PrsA (Streptococcus agalactiae serotype V (strain ATCC BAA-611 / 2603 V/R)).